Consider the following 276-residue polypeptide: Octanoyltransferase LipM (276 aa).

A BPL/LPL catalytic domain is found at 32–247 (GALPPVIRFY…GFEKGLDIKL (216 aa)). Cys149 acts as the Acyl-thioester intermediate in catalysis.

This sequence belongs to the octanoyltransferase LipM family. Monomer.

It carries out the reaction octanoyl-[ACP] + L-lysyl-[protein] = N(6)-octanoyl-L-lysyl-[protein] + holo-[ACP] + H(+). It participates in protein modification; protein lipoylation via endogenous pathway; protein N(6)-(lipoyl)lysine from octanoyl-[acyl-carrier-protein]. Functionally, catalyzes the transfer of endogenously produced octanoic acid from octanoyl-acyl-carrier-protein onto the lipoyl domain of GcvH, an intermediate carrier during protein lipoylation. This Macrococcus caseolyticus (strain JCSC5402) (Macrococcoides caseolyticum) protein is Octanoyltransferase LipM.